We begin with the raw amino-acid sequence, 359 residues long: Gene 58 protein (359 aa).

11 consecutive transmembrane segments (helical) span residues 12–32 (TMAAFGTGMLGAASFVWCFLF), 45–65 (VDELFFWGSLCVQVMMLFFCF), 75–95 (YLDLICAVNIVALFGCLICLQ), 103–123 (YLPILFSLNLIWLSVWLPVTF), 132–152 (YANAYFQLGFFTATTVHYLLL), 154–174 (FGSVTTSFLFIPFACFLIAGL), 220–240 (LCVVAVMTVGFAVFMTAAGVY), 246–266 (VLKTYLLMFQFGTFCVGGMGY), 271–289 (ATFVYCMTACILMPLVFVL), 296–318 (SVLFLAIFFLFINGVTCETTIML), and 330–350 (IVLSVCLLVNICITLSLNVLY).

The protein belongs to the herpesviridae BMRF2 family.

It localises to the host membrane. This chain is Gene 58 protein (58), found in Equine herpesvirus 2 (strain 86/87) (EHV-2).